The following is a 259-amino-acid chain: Chloroplastic group IIB intron splicing facilitator CRS2, chloroplastic (259 aa).

A disordered region spans residues 1–21 (MSLAVATPASARLSPLTTSSP). The N-terminal 49 residues, 1–49 (MSLAVATPASARLSPLTTSSPEPCRRRRLLLSAAAPLRRTRLRRRIAVV), are a transit peptide targeting the chloroplast. Tyr-77 lines the tRNA pocket. Residue His-82 is the Proton acceptor of the active site. The tRNA site is built by Tyr-127, Asn-129, and Asn-175.

The protein belongs to the PTH family. CRS2 subfamily. As to quaternary structure, part of large ribonucleo-protein complexes that include group IIB introns and either CAF1 or CAF2.

It localises to the plastid. The protein resides in the chloroplast stroma. Its function is as follows. Required for the splicing of group IIB introns in chloroplasts. The sequence is that of Chloroplastic group IIB intron splicing facilitator CRS2, chloroplastic from Oryza sativa subsp. japonica (Rice).